Reading from the N-terminus, the 354-residue chain is RNA 3'-terminal phosphate cyclase (354 aa).

Residues Q100 and 290-293 each bind ATP; that span reads HMGD. The active-site Tele-AMP-histidine intermediate is H316.

Belongs to the RNA 3'-terminal cyclase family. Type 1 subfamily.

Its subcellular location is the cytoplasm. It carries out the reaction a 3'-end 3'-phospho-ribonucleotide-RNA + ATP = a 3'-end 2',3'-cyclophospho-ribonucleotide-RNA + AMP + diphosphate. Catalyzes the conversion of 3'-phosphate to a 2',3'-cyclic phosphodiester at the end of RNA. The mechanism of action of the enzyme occurs in 3 steps: (A) adenylation of the enzyme by ATP; (B) transfer of adenylate to an RNA-N3'P to produce RNA-N3'PP5'A; (C) and attack of the adjacent 2'-hydroxyl on the 3'-phosphorus in the diester linkage to produce the cyclic end product. The biological role of this enzyme is unknown but it is likely to function in some aspects of cellular RNA processing. In Caldivirga maquilingensis (strain ATCC 700844 / DSM 13496 / JCM 10307 / IC-167), this protein is RNA 3'-terminal phosphate cyclase.